Here is a 397-residue protein sequence, read N- to C-terminus: Methyltransferase/ribosomally synthesized type I borosin cyclic peptide precursor mroMa1 (397 aa).

The segment at 1-246 (MALKKPGSLT…TTSTFYVPPR (246 aa)) is methyltransferase domain. Residues Arg70, Tyr74, and Tyr96 contribute to the active site. Positions 96, 98, 101, 128, 170, 208, 239, and 240 each coordinate S-adenosyl-L-methionine. The tract at residues 247 to 365 (TPAPIDPKAV…GPIFVVMRQL (119 aa)) is clasp domain. The interval 366–388 (PSAIASGQEPSQEEIARADDATA) is precursor leader. 2 positions are modified to N-methylisoleucine: Ile391 and Ile392. N-methyltyrosine is present on Tyr393. N-methylisoleucine is present on Ile394. Residue Val395 is modified to N-methylvaline.

It in the N-terminal section; belongs to the precorrin methyltransferase family. As to quaternary structure, homodimer. MroMA automethylates at Ile-391, Ile-392, Tyr-393, Ile-394 and Val-395 before being processed by the a prolyloligopeptidase which likely forms a peptidyl ester upon removal of the follower propeptide, which then undergoes macrocyclization with the N-terminus of the modified core peptide. Peptide backbone alpha-N-methylations change the physicochemical properties of amide bonds to provide structural constraints and other favorable characteristics including biological membrane permeability to peptides.

The protein operates within secondary metabolite biosynthesis. Functionally, fusion protein of the methyltransferase mroM1 and a type I borosin core peptide; part of the gene cluster that mediates the biosynthesis of a type I borosin, a highly methylated cyclic peptide with potent biological activities. Type I borosins derive from the C-terminus of the fusion protein, and it is the same protein that methylates its own C-terminus using S-adenosyl methionine (SAM). The C-terminus is subsequently cleaved off and macrocyclized by a prolyloligopeptidase to give the final product. The protein is Methyltransferase/ribosomally synthesized type I borosin cyclic peptide precursor mroMa1 of Mycena rosella (Pink bonnet).